We begin with the raw amino-acid sequence, 190 residues long: GTP cyclohydrolase 1 (190 aa).

Zn(2+) contacts are provided by cysteine 75, histidine 78, and cysteine 146.

This sequence belongs to the GTP cyclohydrolase I family. Toroid-shaped homodecamer, composed of two pentamers of five dimers.

The catalysed reaction is GTP + H2O = 7,8-dihydroneopterin 3'-triphosphate + formate + H(+). The protein operates within cofactor biosynthesis; 7,8-dihydroneopterin triphosphate biosynthesis; 7,8-dihydroneopterin triphosphate from GTP: step 1/1. This chain is GTP cyclohydrolase 1, found in Campylobacter jejuni subsp. jejuni serotype O:23/36 (strain 81-176).